The following is a 56-amino-acid chain: UPF0391 membrane protein PSHAa0537 (56 aa).

Transmembrane regions (helical) follow at residues 6–26 (ITFL…IAGA) and 27–47 (AAGI…ISLV).

It belongs to the UPF0391 family.

Its subcellular location is the cell membrane. The sequence is that of UPF0391 membrane protein PSHAa0537 from Pseudoalteromonas translucida (strain TAC 125).